Reading from the N-terminus, the 570-residue chain is Peptidyl-prolyl cis-trans isomerase CYP63 (570 aa).

Residues 10 to 174 (FLDVSIGGDP…SPVKIIDCGE (165 aa)) enclose the PPIase cyclophilin-type domain. The interval 180-570 (AHDAAEREKG…GKRGLVSYAD (391 aa)) is disordered. Over residues 203–219 (VSDREAKETRKKESNEK) the composition is skewed to basic and acidic residues. 2 stretches are compositionally biased toward low complexity: residues 229-238 (SSDSYSSSSD) and 246-259 (EAYS…SSSS). Positions 262–292 (KHRKRKSTTRHKGRRGERKSKGRSGKKKARP) are enriched in basic residues. Positions 297–309 (STNSSSDTESSSS) are enriched in low complexity. Residues 323–339 (VKVDNADQHANLDDSVK) are compositionally biased toward basic and acidic residues. Ser-340 is subject to Phosphoserine. Basic residues predominate over residues 340–351 (SRSRSPIRRRNQ). A compositionally biased stretch (low complexity) spans 352–365 (NSRSKSPSRSPVRV). Composition is skewed to basic and acidic residues over residues 387-397 (SPREKPTEETV) and 437-467 (SPPR…ERSP). Residues 468 to 490 (RGRFRSPPRRRSPPRYNRRRRST) show a composition bias toward basic residues. Over residues 495–505 (DGYRRRLRDGS) the composition is skewed to basic and acidic residues. Residues 509–523 (SPRHRSRSQSPRKRQ) are compositionally biased toward basic residues. The segment covering 546 to 555 (SPAESLSPSH) has biased composition (low complexity).

The protein belongs to the cyclophilin-type PPIase family. In terms of assembly, interacts with SNRNP35, RNU1, SCL28, SCL30, SR30 and SR34. The binding to SR34 is phosphorylation-dependent. In terms of tissue distribution, ubiquitous.

It localises to the nucleus. Its subcellular location is the nucleoplasm. The protein localises to the nucleus speckle. The catalysed reaction is [protein]-peptidylproline (omega=180) = [protein]-peptidylproline (omega=0). PPIases accelerate the folding of proteins. It catalyzes the cis-trans isomerization of proline imidic peptide bonds in oligopeptides. May be implicated in the folding, transport, and assembly of proteins. Probably involved in early steps of spliceosomal assembly. This chain is Peptidyl-prolyl cis-trans isomerase CYP63 (CYP63), found in Arabidopsis thaliana (Mouse-ear cress).